A 466-amino-acid chain; its full sequence is L-seryl-tRNA(Sec) selenium transferase (466 aa).

An N6-(pyridoxal phosphate)lysine modification is found at Lys-294.

Belongs to the SelA family. It depends on pyridoxal 5'-phosphate as a cofactor.

It is found in the cytoplasm. It catalyses the reaction L-seryl-tRNA(Sec) + selenophosphate + H(+) = L-selenocysteinyl-tRNA(Sec) + phosphate. The protein operates within aminoacyl-tRNA biosynthesis; selenocysteinyl-tRNA(Sec) biosynthesis; selenocysteinyl-tRNA(Sec) from L-seryl-tRNA(Sec) (bacterial route): step 1/1. Functionally, converts seryl-tRNA(Sec) to selenocysteinyl-tRNA(Sec) required for selenoprotein biosynthesis. The polypeptide is L-seryl-tRNA(Sec) selenium transferase (Carboxydothermus hydrogenoformans (strain ATCC BAA-161 / DSM 6008 / Z-2901)).